The following is a 506-amino-acid chain: WD repeat-containing protein 55 homolog (506 aa).

Basic and acidic residues predominate over residues 1-11 (MHRHDCFKTPA). Disordered regions lie at residues 1–20 (MHRHDCFKTPADEDELDDID), 33–87 (QEVL…SDDS), and 100–132 (AKRRKEQNAMDGAEPSGSGPSGSGDYSHLDEDD). Residues 33–48 (QEVLNESESDDDEYDL) are compositionally biased toward acidic residues. Positions 61–74 (GNISSNESISSDGS) are enriched in low complexity. The span at 78–87 (NAEDTDSDDS) shows a compositional bias: acidic residues. WD repeat units follow at residues 156 to 195 (RLEDFITDICFHPERDIIALATIIGDVHLYEYGNEENKLL), 200 to 239 (VHAKACRDVEFTEDGRSLITCSKDKCVMVTDMETEKLKKL), 243 to 281 (AHDDAINKLHVLDERLFATGDDAGTVKLWDFRTKDAIFE), 284 to 323 (EVEDQITQMLTNEQNKLLLATSADGYLTTFNIGARKLYVQ), 326 to 365 (PYEEELNCMGIYRGSSKLVVGTSKGRLYTYNWGYFGYHCD), and 410 to 449 (QHNMPIESLDINSSGELLASSSHNNDVRFWNVKYFEDFGD). The interval 480-506 (DMTKEQDDDDNDDGGNNTTAAGSNNVT) is disordered. The span at 493–506 (GGNNTTAAGSNNVT) shows a compositional bias: low complexity.

It belongs to the WD repeat WDR55 family.

In Drosophila mojavensis (Fruit fly), this protein is WD repeat-containing protein 55 homolog.